Consider the following 496-residue polypeptide: Cytochrome P450 monooxygenase cle4 (496 aa).

The helical transmembrane segment at F12–Y34 threads the bilayer. Residue C435 participates in heme binding.

It belongs to the cytochrome P450 family. The cofactor is heme.

The protein localises to the membrane. The protein operates within secondary metabolite biosynthesis; terpenoid biosynthesis. In terms of biological role, cytochrome P450 monooxygenase; part of the cluster A that mediates the biosynthesis of chevalone E and its oxidized derivatives that possess a unique five-membered lactone ring and can synergistically enhance the cytotoxicity of doxorubicin (DOX) in breast cancer cells. Within the pathway, cle4 is involved in hydroxylation of the chavalone E scaffold at positions C-11 and C-12 and contributes with cle2 to the production of seven oxidation derivatives. The molecular scaffold is commonly biosynthesized by a series of enzymes including the non-reducing polyketide synthase (NR-PKS) cle1 that produces the alpha-pyrone triacetic acid lactone (TAL); The membrane-bound prenyltransferase cle5 that accepts TAL as its substrate to perform a C-3 geranylgeranylation reaction, in which the pathway-dedicated GGPS cle6 is required to provide GGPP, the other substrate of cle5; the FAD-dependent monooxygenase Cle3 that forms an (S)-epoxide ring at the terminal olefin of the geranylgeranyl group; and the terpene cyclase Cle7 that catalyzes the cyclization of the prenyl group that yields the pentacyclic pathway intermediate chevalone E. Chevalone E can derivatize into seven new oxidized analogs by the cytochrome P450 monooxygenases cle2 (acting at C-20) and cle4 (acting at C-11 and C-12). In Aspergillus versicolor, this protein is Cytochrome P450 monooxygenase cle4.